Here is a 249-residue protein sequence, read N- to C-terminus: MVKLAFGSVGDSFSATSIKAYVAEFIATLLFVFAGVGSAIAYGQLTNGGALDPAGLVAIAIAHALALFVGVSVAANISGGHLNPAVTFGLAVGGHITILTGVFYWVAQLLGATVACLLLGFVTHGKAIPTHAVAGISELEGVVFEVVITFALVYTVYATAADPKKGSLGTIAPIAIGFIVGANILAAGPFSGGSMNPARSFGPAVAAGDFAGNWVYWVGPLVGGGLAGLVYGDVFIGGSYQQVADQDYA.

The next 2 membrane-spanning stretches (helical) occupy residues 20–40 (AYVA…GSAI) and 54–74 (AGLV…VSVA). The NPA 1 motif lies at 83 to 85 (NPA). The next 3 membrane-spanning stretches (helical) occupy residues 102–122 (VFYW…LGFV), 141–161 (GVVF…ATAA), and 168–188 (LGTI…LAAG). The NPA 2 signature appears at 196 to 198 (NPA). Residues 217 to 237 (WVGPLVGGGLAGLVYGDVFIG) traverse the membrane as a helical segment.

It belongs to the MIP/aquaporin (TC 1.A.8) family. TIP (TC 1.A.8.10) subfamily.

It is found in the vacuole membrane. Functionally, aquaporins facilitate the transport of water and small neutral solutes across cell membranes. The polypeptide is Aquaporin TIP2-1 (TIP2-1) (Zea mays (Maize)).